The chain runs to 199 residues: Fe/S biogenesis protein NfuA (199 aa).

The [4Fe-4S] cluster site is built by C151 and C154.

The protein belongs to the NfuA family. In terms of assembly, homodimer. Requires [4Fe-4S] cluster as cofactor.

In terms of biological role, involved in iron-sulfur cluster biogenesis. Binds a 4Fe-4S cluster, can transfer this cluster to apoproteins, and thereby intervenes in the maturation of Fe/S proteins. Could also act as a scaffold/chaperone for damaged Fe/S proteins. The protein is Fe/S biogenesis protein NfuA of Xanthomonas euvesicatoria pv. vesicatoria (strain 85-10) (Xanthomonas campestris pv. vesicatoria).